The sequence spans 101 residues: Phosphoribosyl-AMP cyclohydrolase (101 aa).

Asp71 provides a ligand contact to Mg(2+). Zn(2+) is bound at residue Cys72. Mg(2+)-binding residues include Asp73 and Asp75. Residues Cys88 and Cys95 each coordinate Zn(2+).

It belongs to the PRA-CH family. Homodimer. Mg(2+) serves as cofactor. Zn(2+) is required as a cofactor.

Its subcellular location is the cytoplasm. It carries out the reaction 1-(5-phospho-beta-D-ribosyl)-5'-AMP + H2O = 1-(5-phospho-beta-D-ribosyl)-5-[(5-phospho-beta-D-ribosylamino)methylideneamino]imidazole-4-carboxamide. Its pathway is amino-acid biosynthesis; L-histidine biosynthesis; L-histidine from 5-phospho-alpha-D-ribose 1-diphosphate: step 3/9. Catalyzes the hydrolysis of the adenine ring of phosphoribosyl-AMP. The sequence is that of Phosphoribosyl-AMP cyclohydrolase from Bacillus cereus (strain ATCC 10987 / NRS 248).